Here is a 514-residue protein sequence, read N- to C-terminus: Probable WRKY transcription factor 4 (514 aa).

3 disordered regions span residues 1 to 28 (MSEK…PPRP), 175 to 204 (QPQT…PLPA), and 278 to 394 (YKGQ…TVTE). Composition is skewed to polar residues over residues 185–198 (QVQS…QIPT) and 286–299 (PPQN…DNTA). The segment at residues 223–287 (NVDKPADDGY…YKGQHNHEPP (65 aa)) is a DNA-binding region (WRKY 1). Over residues 300 to 313 (NINGSSINNNRGSS) the composition is skewed to low complexity. Over residues 315 to 326 (LGASQFQTNSSN) the composition is skewed to polar residues. Residues 359–380 (TDVREKDENEPDPKRRSTEVRI) are compositionally biased toward basic and acidic residues. Positions 403–468 (SEVDLLDDGY…YEGKHNHDLP (66 aa)) form a DNA-binding region, WRKY 2. Zn(2+) contacts are provided by Cys-434, Thr-436, Cys-439, His-463, and His-465. The disordered stretch occupies residues 464–514 (NHDLPAAKSSSHAAAAAQLRPDNRPGGLANLNQQQQQQPVARLRLKEEQTT). A compositionally biased stretch (low complexity) spans 469 to 480 (AAKSSSHAAAAA).

In young, mature and senescent leaves.

The protein resides in the nucleus. Functionally, transcription factor that binds specifically to the W box (5'-(T)TGAC[CT]-3'), a frequently occurring elicitor-responsive cis-acting element. Has a positive role in resistance to necrotrophic pathogens (e.g. Botrytis cinerea), but a negative effect on plant resistance to biotrophic pathogens (e.g. Pseudomonas syringae). This Arabidopsis thaliana (Mouse-ear cress) protein is Probable WRKY transcription factor 4 (WRKY4).